Here is a 375-residue protein sequence, read N- to C-terminus: MSAVLDLTCELIARPSVTPDDAGCQALLAARLKQAGFQCDHLRLGDVDNLWATHGLGAPVLVLLGHTDVVPTGPRESWTSDPFTPHIRDGVLYGRGAADMKGSVAAFVVAAEQFVADHPDHPGTLAVLLTSDEEGDAIDGVRHVARLFAARGQRIDWCITGEPSSTATLGDLLRVGRRGSLSAKLRVQGVQGHVAYPEKARNPIHQAAPALAELCARRWDDGYESFPPTSLQISNIHAGTGANNVIPGELDVDFNIRYNPHWDAPKLEAEITALLERHGLQYTLKWHRSGEPFYTPEGTLRAIARAVLAEHIGRAPEESTGGGTSDARFIAPLGAQCIEVGPVNASIHQVDENVRVDDLEALPGLYQRLVERLLV.

H66 contributes to the Zn(2+) binding site. D68 is an active-site residue. D99 contacts Zn(2+). Catalysis depends on E133, which acts as the Proton acceptor. E134, E162, and H348 together coordinate Zn(2+).

Belongs to the peptidase M20A family. DapE subfamily. In terms of assembly, homodimer. Zn(2+) is required as a cofactor. Requires Co(2+) as cofactor.

It carries out the reaction N-succinyl-(2S,6S)-2,6-diaminopimelate + H2O = (2S,6S)-2,6-diaminopimelate + succinate. It participates in amino-acid biosynthesis; L-lysine biosynthesis via DAP pathway; LL-2,6-diaminopimelate from (S)-tetrahydrodipicolinate (succinylase route): step 3/3. Functionally, catalyzes the hydrolysis of N-succinyl-L,L-diaminopimelic acid (SDAP), forming succinate and LL-2,6-diaminopimelate (DAP), an intermediate involved in the bacterial biosynthesis of lysine and meso-diaminopimelic acid, an essential component of bacterial cell walls. This Stenotrophomonas maltophilia (strain K279a) protein is Succinyl-diaminopimelate desuccinylase.